The chain runs to 279 residues: Shikimate dehydrogenase (NADP(+)) (279 aa).

Shikimate is bound by residues 18–20 and Thr64; that span reads SRS. Lys68 acts as the Proton acceptor in catalysis. Glu80 contributes to the NADP(+) binding site. Shikimate-binding residues include Asn89 and Asp104. Residues 129–133, 153–158, and Ile218 each bind NADP(+); these read GAGGA and NRTVSR. Tyr220 serves as a coordination point for shikimate. Residue Gly241 participates in NADP(+) binding.

This sequence belongs to the shikimate dehydrogenase family. As to quaternary structure, homodimer.

The catalysed reaction is shikimate + NADP(+) = 3-dehydroshikimate + NADPH + H(+). It functions in the pathway metabolic intermediate biosynthesis; chorismate biosynthesis; chorismate from D-erythrose 4-phosphate and phosphoenolpyruvate: step 4/7. Functionally, involved in the biosynthesis of the chorismate, which leads to the biosynthesis of aromatic amino acids. Catalyzes the reversible NADPH linked reduction of 3-dehydroshikimate (DHSA) to yield shikimate (SA). The polypeptide is Shikimate dehydrogenase (NADP(+)) (Chelativorans sp. (strain BNC1)).